The following is a 441-amino-acid chain: Chromosome partition protein MukF (441 aa).

Positions 208 to 236 (LTETSSTLRELQDTLEAAGDKLQTSLLSI) are leucine-zipper.

Belongs to the MukF family. Interacts, and probably forms a ternary complex, with MukE and MukB via its C-terminal region. The complex formation is stimulated by calcium or magnesium. It is required for an interaction between MukE and MukB.

Its subcellular location is the cytoplasm. The protein localises to the nucleoid. Involved in chromosome condensation, segregation and cell cycle progression. May participate in facilitating chromosome segregation by condensation DNA from both sides of a centrally located replisome during cell division. Not required for mini-F plasmid partitioning. Probably acts via its interaction with MukB and MukE. Overexpression results in anucleate cells. It has a calcium binding activity. The protein is Chromosome partition protein MukF of Pectobacterium atrosepticum (strain SCRI 1043 / ATCC BAA-672) (Erwinia carotovora subsp. atroseptica).